Reading from the N-terminus, the 300-residue chain is Auxin-responsive protein IAA7 (300 aa).

2 disordered regions span residues 1–80 (MGEA…DGDK) and 92–125 (VSHSQGKANKNKGSPEEEEAHPPPATGNNALASN). An EAR-like (transcriptional repression) motif is present at residues 43 to 47 (LSLGL). The span at 92-103 (VSHSQGKANKNK) shows a compositional bias: polar residues. The 105-residue stretch at 177–281 (APFIKINMDG…SVKRLRVLKT (105 aa)) folds into the PB1 domain.

It belongs to the Aux/IAA family. Homodimers and heterodimers. Expressed at low levels in roots and shoots.

It localises to the nucleus. In terms of biological role, aux/IAA proteins are short-lived transcriptional factors that function as repressors of early auxin response genes at low auxin concentrations. The polypeptide is Auxin-responsive protein IAA7 (IAA7) (Oryza sativa subsp. japonica (Rice)).